A 384-amino-acid polypeptide reads, in one-letter code: 5-cytosine rRNA methyltransferase NSUN4 (384 aa).

A mitochondrion-targeting transit peptide spans 1–25; it reads MAALVVRGVRDMLKRADFATVPRRQ. Gly185, Gly186, Lys187, and Asp204 together coordinate S-adenosyl-L-methionine. Residue Ser206 is modified to Phosphoserine. Positions 209, 237, 238, and 255 each coordinate S-adenosyl-L-methionine. The active-site Nucleophile is the Cys310.

The protein belongs to the class I-like SAM-binding methyltransferase superfamily. RsmB/NOP family. In terms of assembly, heterodimer with MTERFD2/MTERF4; this interaction seems to be required for NSUN4 recruitment to the mitochondrial large ribosomal subunit.

The protein localises to the mitochondrion. The catalysed reaction is a cytidine in rRNA + S-adenosyl-L-methionine = a 5-methylcytidine in rRNA + S-adenosyl-L-homocysteine + H(+). The enzyme catalyses a cytidine in mRNA + S-adenosyl-L-methionine = a 5-methylcytidine in mRNA + S-adenosyl-L-homocysteine + H(+). Functionally, mitochondrial RNA cytosine C(5)-methyltransferase that methylates cytosine to 5-methylcytosine (m5C) in various RNAs, such as rRNAs, mRNAs and some long non-coding RNAs (lncRNAs). Involved in mitochondrial ribosome small subunit (SSU) maturation by catalyzing methylation of mitochondrial 12S rRNA; the function is independent of MTERFD2/MTERF4 and assembled mitochondrial ribosome large subunit (LSU). Targeted to LSU by MTERFD2/MTERF4 and probably is involved in a final step in ribosome biogenesis to ensure that SSU and LSU are assembled. In vitro can methylate 16S rRNA of the LSU; the methylation is enhanced by MTERFD/MTERF4. Also acts as a regulator of innate immunity by marking double-stranded mitochondrial RNAs(mt-dsRNAs) generated in response to stress: catalyzes m5C modification on mitochondrial RNAs, such as a mRNAs and lncRNAs, with a preference for the termini of light-strand lncRNAs, promoting their degradation and cytosolic release. Modified light-strand lncRNAs are then recognized by C1QBP reader and recruited to the mitochondrial degradosome complex, which promotes their degradation. The protein is 5-cytosine rRNA methyltransferase NSUN4 (NSUN4) of Bos taurus (Bovine).